The sequence spans 191 residues: Leucyl/phenylalanyl-tRNA--protein transferase (191 aa).

It belongs to the L/F-transferase family.

It localises to the cytoplasm. It carries out the reaction N-terminal L-lysyl-[protein] + L-leucyl-tRNA(Leu) = N-terminal L-leucyl-L-lysyl-[protein] + tRNA(Leu) + H(+). The catalysed reaction is N-terminal L-arginyl-[protein] + L-leucyl-tRNA(Leu) = N-terminal L-leucyl-L-arginyl-[protein] + tRNA(Leu) + H(+). It catalyses the reaction L-phenylalanyl-tRNA(Phe) + an N-terminal L-alpha-aminoacyl-[protein] = an N-terminal L-phenylalanyl-L-alpha-aminoacyl-[protein] + tRNA(Phe). In terms of biological role, functions in the N-end rule pathway of protein degradation where it conjugates Leu, Phe and, less efficiently, Met from aminoacyl-tRNAs to the N-termini of proteins containing an N-terminal arginine or lysine. This is Leucyl/phenylalanyl-tRNA--protein transferase from Gloeothece citriformis (strain PCC 7424) (Cyanothece sp. (strain PCC 7424)).